Consider the following 522-residue polypeptide: Pectinesterase/pectinesterase inhibitor PPE8B (522 aa).

The first 30 residues, 1 to 30 (MPYLLMASHNPLPAGKQLLLLVLLCAFFSS), serve as a signal peptide directing secretion. Residues 31-174 (SFIPFASCSI…TSLVQELLTQ (144 aa)) are pectinesterase inhibitor PPE8B. Residues asparagine 105, asparagine 118, asparagine 119, asparagine 218, asparagine 221, and asparagine 274 are each glycosylated (N-linked (GlcNAc...) asparagine). The interval 208 to 506 (DAIVAQDGTG…YTVAQFIEGN (299 aa)) is pectinesterase PPE8B. Residues threonine 283 and glutamine 313 each coordinate substrate. Aspartate 336 functions as the Proton donor; for pectinesterase activity in the catalytic mechanism. Cysteine 350 and cysteine 370 are oxidised to a cystine. Residue aspartate 357 is the Nucleophile; for pectinesterase activity of the active site. An N-linked (GlcNAc...) asparagine glycan is attached at asparagine 405. Arginine 426 and tryptophan 428 together coordinate substrate. N-linked (GlcNAc...) asparagine glycans are attached at residues asparagine 489 and asparagine 496.

This sequence in the N-terminal section; belongs to the PMEI family. It in the C-terminal section; belongs to the pectinesterase family.

It localises to the secreted. Its subcellular location is the cell wall. It catalyses the reaction [(1-&gt;4)-alpha-D-galacturonosyl methyl ester](n) + n H2O = [(1-&gt;4)-alpha-D-galacturonosyl](n) + n methanol + n H(+). The protein operates within glycan metabolism; pectin degradation; 2-dehydro-3-deoxy-D-gluconate from pectin: step 1/5. Functionally, may have roles in the deposition of pectin in developing tissues and in the wall loosening and cell separation that occurs in cell expansion, fruit ripening and abscission. This Prunus persica (Peach) protein is Pectinesterase/pectinesterase inhibitor PPE8B.